The primary structure comprises 268 residues: Small ribosomal subunit protein uS2 (268 aa).

A disordered region spans residues 233 to 268; it reads SVREEEFAEAAAEGEEKPARRAPAKKAAKKGDDAQA.

The protein belongs to the universal ribosomal protein uS2 family.

The sequence is that of Small ribosomal subunit protein uS2 from Stenotrophomonas maltophilia (strain K279a).